We begin with the raw amino-acid sequence, 501 residues long: Nucleic-acid-binding protein from transposon X-element (501 aa).

Disordered regions lie at residues Ser20–Asn71 and Ala105–Pro128. A CCHC-type zinc finger spans residues Val285–Lys302. Disordered regions lie at residues Arg353–Gly385 and Gln400–Ser443. Residues Gln407–Arg422 are compositionally biased toward low complexity. Residues Gly434 to Ser443 are compositionally biased toward polar residues.

Its subcellular location is the virion. Functionally, strongly basic protein that binds directly to retroviral RNA and may be involved in its packaging and in the reverse transcription process. The sequence is that of Nucleic-acid-binding protein from transposon X-element from Drosophila melanogaster (Fruit fly).